We begin with the raw amino-acid sequence, 147 residues long: uncharacterized protein (147 aa).

Over methionine 1–lysine 16 the chain is Extracellular. The chain crosses the membrane as a helical span at residues valine 17–isoleucine 37. Residues threonine 38–asparagine 105 lie on the Cytoplasmic side of the membrane. A helical transmembrane segment spans residues glutamate 106–serine 126. At glutamate 127 to asparagine 147 the chain is on the extracellular side.

The protein resides in the membrane. This is an uncharacterized protein from Saccharomyces cerevisiae (strain ATCC 204508 / S288c) (Baker's yeast).